The chain runs to 44 residues: Photosystem I reaction center subunit IX (44 aa).

The chain crosses the membrane as a helical span at residues 9 to 29 (WFRSAPVVATIWIVLTAGILV).

It belongs to the PsaJ family.

The protein resides in the cellular thylakoid membrane. Functionally, may help in the organization of the PsaE and PsaF subunits. The chain is Photosystem I reaction center subunit IX from Prochlorococcus marinus (strain MIT 9211).